Consider the following 370-residue polypeptide: Putative F-box protein At3g10430 (370 aa).

Positions 1–47 constitute an F-box domain; that stretch reads MGSSLPFDLILEILQRTPAESLLRFKSTCKKWYELISNDKRFMYKHL.

This Arabidopsis thaliana (Mouse-ear cress) protein is Putative F-box protein At3g10430.